The sequence spans 230 residues: Broad specificity amino-acid racemase YgeA (230 aa).

Residues M10, Q52, and 83 to 85 each bind substrate; that span reads TNT. T83 serves as the catalytic Proton donor. C197 functions as the Proton acceptor in the catalytic mechanism. A substrate-binding site is contributed by 198 to 199; the sequence is TE.

It belongs to the aspartate/glutamate racemases family.

It carries out the reaction an L-alpha-amino acid = a D-alpha-amino acid. The enzyme catalyses L-homoserine = D-homoserine. In terms of biological role, amino-acid racemase able to utilize a broad range of substrates. Highest activity is observed with L-homoserine and D-homoserine. Has tenfold lower activity against L-methionine, L-leucine, L-valine and L-histidine. Has low activity with L-norvaline, L-asparagine, D-methionine, L-aminobutyric acid, L-isoleucine, L-serine, L-norleucine, L-alanine, L-glutamine, LL-diaminopimelic acid and L-phenylalanine. Has no activity against ten L-amino acids (Thr, Glu, Asp, Arg, Lys, Tyr, Trp, Orn, Cit and Aad). D-amino acids might be used as components of peptidoglycan and/or be involved in peptidoglycan metabolism and remodeling. The chain is Broad specificity amino-acid racemase YgeA (ygeA) from Escherichia coli (strain K12).